Reading from the N-terminus, the 73-residue chain is Conotoxin im23b (73 aa).

The signal sequence occupies residues 1–22; that stretch reads MIMRMTLTLFVLVVMTAASASG. Residues 23–28 constitute a propeptide that is removed on maturation; that stretch reads DALTEA. Intrachain disulfides connect Cys34-Cys41, Cys45-Cys55, and Cys56-Cys71.

Belongs to the conotoxin K superfamily. As to expression, expressed by the venom duct.

It localises to the secreted. Its function is as follows. Neurotoxin that induces excitatory symptoms in mice following intracranial administration. No symptoms are observed after intraperitoneal and intravenous (tail vein) injections. This is Conotoxin im23b from Conus imperialis (Imperial cone).